Consider the following 399-residue polypeptide: Elongation factor Tu (399 aa).

Residues 10-204 (KPHVNIGTIG…AVDANIPEPV (195 aa)) enclose the tr-type G domain. The interval 19 to 26 (GHVDHGKT) is G1. 19–26 (GHVDHGKT) is a GTP binding site. Position 26 (T26) interacts with Mg(2+). The segment at 60 to 64 (GITIN) is G2. Positions 81–84 (DCPG) are G3. GTP contacts are provided by residues 81–85 (DCPGH) and 136–139 (NKCD). The segment at 136–139 (NKCD) is G4. The G5 stretch occupies residues 174–176 (SGL).

The protein belongs to the TRAFAC class translation factor GTPase superfamily. Classic translation factor GTPase family. EF-Tu/EF-1A subfamily. As to quaternary structure, monomer.

The protein resides in the cytoplasm. The enzyme catalyses GTP + H2O = GDP + phosphate + H(+). Its function is as follows. GTP hydrolase that promotes the GTP-dependent binding of aminoacyl-tRNA to the A-site of ribosomes during protein biosynthesis. The sequence is that of Elongation factor Tu from Synechococcus sp. (strain RCC307).